The following is a 440-amino-acid chain: Serine/threonine-protein kinase VRK1 (440 aa).

In terms of domain architecture, Protein kinase spans 37 to 317; sequence WKLGLPIGQG…LLEYTEKPLY (281 aa). ATP is bound by residues 43–51 and lysine 71; that span reads IGQGGFGCI. Residue lysine 71 forms a Glycyl lysine isopeptide (Lys-Gly) (interchain with G-Cter in SUMO2) linkage. Aspartate 177 acts as the Proton acceptor in catalysis. Serine 342 is modified (phosphoserine; by PLK3). Serine 376 carries the post-translational modification Phosphoserine. Threonine 378 is modified (phosphothreonine). 2 stretches are compositionally biased toward polar residues: residues 379 to 391 and 398 to 410; these read QVQE…SVES and SMSQ…SSSD. Positions 379-440 are disordered; it reads QVQEAAQTRS…GSRTRKKAQK (62 aa). The tract at residues 387 to 393 is required for interaction with the nucleosome; that stretch reads RSVESQG.

Belongs to the protein kinase superfamily. CK1 Ser/Thr protein kinase family. VRK subfamily. Interacts with HDAC1, KAT2B, SETDB1, KDM3A and KDM4A. Associates with the nucleosome through interactions with nucleosome DNA, histone H2A and histone H2B; the interaction with H2A and H2B is mediated by the nucleosome acidic patch, a cluster of negatively charged residues of H2A and H2B forming a cleft within the nucleosome core. Post-translationally, autophosphorylated at various serine and threonine residues. Autophosphorylation does not impair its ability to phosphorylate p53/TP53. Phosphorylation by PLK3 leads to induction of Golgi fragmentation during mitosis. Highly expressed in testis. Expressed in liver, kidney and muscle. Weakly expressed in thymus, bone marrow and spleen.

It localises to the nucleus. The protein localises to the cytoplasm. It is found in the cajal body. It carries out the reaction L-seryl-[protein] + ATP = O-phospho-L-seryl-[protein] + ADP + H(+). The catalysed reaction is L-threonyl-[protein] + ATP = O-phospho-L-threonyl-[protein] + ADP + H(+). Its activity is regulated as follows. Active in presence of Mn(2+), Mg(2+) and Zn(2+), but is not functional with Ca(2+) or Cu(2+). Has a higher affinity for Mn(2+) than for Mg(2+). RAN inhibits its autophosphorylation and its ability to phosphorylate histone H3. Its function is as follows. Serine/threonine kinase involved in the regulation of key cellular processes including the cell cycle, nuclear condensation, transcription regulation, and DNA damage response. Controls chromatin organization and remodeling by mediating phosphorylation of histone H3 on 'Thr-4' and histone H2AX (H2aXT4ph). It also phosphorylates KAT5 in response to DNA damage, promoting KAT5 association with chromatin and histone acetyltransferase activity. Is involved in the regulation of cell cycle progression of neural progenitors, and is required for proper cortical neuronal migration. Is involved in neurite elongation and branching in motor neurons, and has an essential role in Cajal bodies assembly, acting through COIL phosphorylation and the control of coilin degradation. Involved in Golgi disassembly during the cell cycle: following phosphorylation by PLK3 during mitosis, required to induce Golgi fragmentation. Phosphorylates BANF1: disrupts its ability to bind DNA, reduces its binding to LEM domain-containing proteins and causes its relocalization from the nucleus to the cytoplasm. Phosphorylates TP53BP1 and p53/TP53 on 'Thr-18', preventing the interaction between p53/TP53 and MDM2. Phosphorylates ATF2 which activates its transcriptional activity. Phosphorylates JUN. This is Serine/threonine-protein kinase VRK1 from Mus musculus (Mouse).